A 233-amino-acid chain; its full sequence is 5'-methylthioadenosine/S-adenosylhomocysteine nucleosidase (233 aa).

E12 (proton acceptor) is an active-site residue. Substrate-binding positions include G78, I153, and 174 to 175; that span reads ME. D198 functions as the Proton donor in the catalytic mechanism.

Belongs to the PNP/UDP phosphorylase family. MtnN subfamily.

It catalyses the reaction S-adenosyl-L-homocysteine + H2O = S-(5-deoxy-D-ribos-5-yl)-L-homocysteine + adenine. The enzyme catalyses S-methyl-5'-thioadenosine + H2O = 5-(methylsulfanyl)-D-ribose + adenine. It carries out the reaction 5'-deoxyadenosine + H2O = 5-deoxy-D-ribose + adenine. It functions in the pathway amino-acid biosynthesis; L-methionine biosynthesis via salvage pathway; S-methyl-5-thio-alpha-D-ribose 1-phosphate from S-methyl-5'-thioadenosine (hydrolase route): step 1/2. Functionally, catalyzes the irreversible cleavage of the glycosidic bond in both 5'-methylthioadenosine (MTA) and S-adenosylhomocysteine (SAH/AdoHcy) to adenine and the corresponding thioribose, 5'-methylthioribose and S-ribosylhomocysteine, respectively. Also cleaves 5'-deoxyadenosine, a toxic by-product of radical S-adenosylmethionine (SAM) enzymes, into 5-deoxyribose and adenine. The sequence is that of 5'-methylthioadenosine/S-adenosylhomocysteine nucleosidase from Exiguobacterium sp. (strain ATCC BAA-1283 / AT1b).